A 342-amino-acid polypeptide reads, in one-letter code: MTNGYIGSYTKKNGKGIYRFELNENQSRIDLLETGFELEASTYLVRNNEVLYGINKEGEQCGVASLKIDDNGELHLLNKCLSSKAGTGCYVSISEDKRYLFEAVYGAGIIRMYELNTHTGEIIRLIQELAHDFPTGTHERQDHPHAHYINQTPDGKYVAVTDLGADRIVTYKFDDNGFEFYKESLFKDSDGTRHIEFHDNGKFAYVVHELSNTVSVAEYNDGKFEELERHLTIPENFDGDTKLAAVRLSHDQQFLYVSNRGHDSIAIFKVLDNGQHLELVTITESGGQFPRDFNIASSDDLLVCAHEQGDSVVTVFERNKETGKITLCDNTRVASEGVCVIF.

It belongs to the cycloisomerase 2 family.

This is an uncharacterized protein from Staphylococcus aureus (strain NCTC 8325 / PS 47).